Consider the following 292-residue polypeptide: Ribosomal RNA small subunit methyltransferase A (292 aa).

S-adenosyl-L-methionine is bound by residues N29, L31, G56, E77, D102, and N127.

It belongs to the class I-like SAM-binding methyltransferase superfamily. rRNA adenine N(6)-methyltransferase family. RsmA subfamily.

The protein localises to the cytoplasm. It carries out the reaction adenosine(1518)/adenosine(1519) in 16S rRNA + 4 S-adenosyl-L-methionine = N(6)-dimethyladenosine(1518)/N(6)-dimethyladenosine(1519) in 16S rRNA + 4 S-adenosyl-L-homocysteine + 4 H(+). Its function is as follows. Specifically dimethylates two adjacent adenosines (A1518 and A1519) in the loop of a conserved hairpin near the 3'-end of 16S rRNA in the 30S particle. May play a critical role in biogenesis of 30S subunits. In Bacillus subtilis (strain 168), this protein is Ribosomal RNA small subunit methyltransferase A.